Reading from the N-terminus, the 344-residue chain is 2,3,4,5-tetrahydropyridine-2,6-dicarboxylate N-succinyltransferase (344 aa).

Glutamate 205 lines the Mg(2+) pocket. The Acyl-anhydride intermediate role is filled by glutamate 221. Residues arginine 223, glycine 238, serine 241, alanine 264, 279–280, glycine 287, lysine 304, and 317–320 contribute to the succinyl-CoA site; these read EA and RRNS.

Belongs to the type 2 tetrahydrodipicolinate N-succinyltransferase family. As to quaternary structure, homotrimer.

Its subcellular location is the cytoplasm. It catalyses the reaction (S)-2,3,4,5-tetrahydrodipicolinate + succinyl-CoA + H2O = (S)-2-succinylamino-6-oxoheptanedioate + CoA. Its pathway is amino-acid biosynthesis; L-lysine biosynthesis via DAP pathway; LL-2,6-diaminopimelate from (S)-tetrahydrodipicolinate (succinylase route): step 1/3. Its function is as follows. Catalyzes the conversion of the cyclic tetrahydrodipicolinate (THDP) into the acyclic N-succinyl-L-2-amino-6-oxopimelate using succinyl-CoA. This chain is 2,3,4,5-tetrahydropyridine-2,6-dicarboxylate N-succinyltransferase, found in Pseudomonas paraeruginosa (strain DSM 24068 / PA7) (Pseudomonas aeruginosa (strain PA7)).